A 70-amino-acid polypeptide reads, in one-letter code: DNA gyrase inhibitor YacG (70 aa).

Residues Cys-9, Cys-12, Cys-28, and Cys-32 each coordinate Zn(2+). Positions 43–70 (ESRKIPGSSIDPESIVTTNNKQDNVDEQ) are disordered.

This sequence belongs to the DNA gyrase inhibitor YacG family. Interacts with GyrB. Zn(2+) is required as a cofactor.

Inhibits all the catalytic activities of DNA gyrase by preventing its interaction with DNA. Acts by binding directly to the C-terminal domain of GyrB, which probably disrupts DNA binding by the gyrase. The polypeptide is DNA gyrase inhibitor YacG (Legionella pneumophila (strain Corby)).